A 303-amino-acid polypeptide reads, in one-letter code: Glycine--tRNA ligase alpha subunit (303 aa).

The protein belongs to the class-II aminoacyl-tRNA synthetase family. In terms of assembly, tetramer of two alpha and two beta subunits.

It is found in the cytoplasm. The enzyme catalyses tRNA(Gly) + glycine + ATP = glycyl-tRNA(Gly) + AMP + diphosphate. The polypeptide is Glycine--tRNA ligase alpha subunit (Bordetella pertussis (strain Tohama I / ATCC BAA-589 / NCTC 13251)).